A 190-amino-acid chain; its full sequence is Vacuolar protein sorting-associated protein 29 (190 aa).

The protein belongs to the VPS29 family. Component of the retromer complex which consists of VPS29 (MAG1), VPS26 (VPS26A or VPS26B), VPS35 (VPS35A or VPS35B or VPS35C), VPS5/17 (SNX1 or SNX2A or SNX2B). Component of a retromer subcomplex consisting of VPS29 (MAG1), VPS26 (VPS26A or VPS26B), VPS35 (VPS35A or VPS35B or VPS35C).

The protein resides in the cytoplasm. It localises to the endosome membrane. It is found in the prevacuolar compartment membrane. Its subcellular location is the golgi apparatus. The protein localises to the trans-Golgi network membrane. The protein resides in the late endosome membrane. Plays a role in vesicular protein sorting. Component of the membrane-associated retromer complex which is essential in endosome-to-Golgi retrograde transport. Required for the auxin-carrier protein PIN2 sorting to the lytic vacuolar pathway and the PIN1 recycling to the plasma membrane, thus influencing auxin transport orientation. Also involved in the efficient sorting of seed storage proteins globulin 12S and albumin 2S. The VPS29-VPS26-VPS35 subcomplex may be involved in recycling of specific cargos from endosome to the plasma membrane. The chain is Vacuolar protein sorting-associated protein 29 from Arabidopsis thaliana (Mouse-ear cress).